Here is a 72-residue protein sequence, read N- to C-terminus: MSKDDSIEFEGSVSETLPNTTFRVKLENGHEIIAHISGRMRKNYIRILTGDRVKVEMTPYDLTKGRITYRMK.

The 72-residue stretch at 1-72 folds into the S1-like domain; sequence MSKDDSIEFE…TKGRITYRMK (72 aa).

The protein belongs to the IF-1 family. In terms of assembly, component of the 30S ribosomal translation pre-initiation complex which assembles on the 30S ribosome in the order IF-2 and IF-3, IF-1 and N-formylmethionyl-tRNA(fMet); mRNA recruitment can occur at any time during PIC assembly.

It localises to the cytoplasm. Its function is as follows. One of the essential components for the initiation of protein synthesis. Stabilizes the binding of IF-2 and IF-3 on the 30S subunit to which N-formylmethionyl-tRNA(fMet) subsequently binds. Helps modulate mRNA selection, yielding the 30S pre-initiation complex (PIC). Upon addition of the 50S ribosomal subunit IF-1, IF-2 and IF-3 are released leaving the mature 70S translation initiation complex. This chain is Translation initiation factor IF-1, found in Xanthomonas euvesicatoria pv. vesicatoria (strain 85-10) (Xanthomonas campestris pv. vesicatoria).